A 112-amino-acid polypeptide reads, in one-letter code: uncharacterized protein (112 aa).

A helical membrane pass occupies residues 89 to 106 (TLYVLVIVGLTILCFLLV).

It belongs to the IIV-6 466R family.

The protein resides in the membrane. This is an uncharacterized protein from Aedes vexans (Inland floodwater mosquito).